A 423-amino-acid chain; its full sequence is MSSQVVGIEPLYIKAEPASPDSPKGSSETETEPPVALAPGPAPTRCLPGHKEEEDGEGAGPGEQGGGKLVLSSLPKRLCLVCGDVASGYHYGVASCEACKAFFKRTIQGSIEYSCPASNECEITKRRRKACQACRFTKCLRVGMLKEGVRLDRVRGGRQKYKRRPEVDPLPFPGPFPAGPLAVAGGPRKTAAPVNALVSHLLVVEPEKLYAMPDPAGPDGHLPAVATLCDLFDREIVVTISWAKSIPGFSSLSLSDQMSVLQSVWMEVLVLGVAQRSLPLQDELAFAEDLVLDEEGARAAGLGELGAALLQLVRRLQALRLEREEYVLLKALALANSDSVHIEDAEAVEQLREALHEALLEYEAGRAGPGGGAERRRAGRLLLTLPLLRQTAGKVLAHFYGVKLEGKVPMHKLFLEMLEAMMD.

The interval 1-67 (MSSQVVGIEP…GAGPGEQGGG (67 aa)) is disordered. A repressor domain region spans residues 1-76 (MSSQVVGIEP…GKLVLSSLPK (76 aa)). A Glycyl lysine isopeptide (Lys-Gly) (interchain with G-Cter in SUMO) cross-link involves residue lysine 14. Residues serine 19 and serine 22 each carry the phosphoserine modification. A compositionally biased stretch (gly residues) spans 58–67 (GAGPGEQGGG). The segment at residues 76-151 (KRLCLVCGDV…VGMLKEGVRL (76 aa)) is a DNA-binding region (nuclear receptor). 2 consecutive NR C4-type zinc fingers follow at residues 79–99 (CLVCGDVASGYHYGVASCEAC) and 115–134 (CPASNECEITKRRRKACQAC). N6-acetyllysine; by PCAF/KAT2B occurs at positions 129, 138, 160, and 162. Residue lysine 189 forms a Glycyl lysine isopeptide (Lys-Gly) (interchain with G-Cter in SUMO2) linkage. One can recognise an NR LBD domain in the interval 193–421 (PVNALVSHLL…KLFLEMLEAM (229 aa)). Lysine 403 participates in a covalent cross-link: Glycyl lysine isopeptide (Lys-Gly) (interchain with G-Cter in SUMO); alternate. Lysine 403 is covalently cross-linked (Glycyl lysine isopeptide (Lys-Gly) (interchain with G-Cter in SUMO2); alternate). The tract at residues 403-423 (KLEGKVPMHKLFLEMLEAMMD) is AF-2 domain.

Belongs to the nuclear hormone receptor family. NR3 subfamily. In terms of assembly, binds DNA as a monomer or a homodimer. Interacts (via the AF2 domain) with coactivator PPARGC1A (via the L3 motif); the interaction greatly enhances transcriptional activity of genes involved in energy metabolism. Interacts with PIAS4; the interaction enhances sumoylation. Interacts with MAPK15; promotes re-localization of ESRRA to the cytoplasm through a XPO1-dependent mechanism then inhibits ESRRA transcriptional activity. Phosphorylation on Ser-19 enhances sumoylation on Lys-14 increasing repression of transcriptional activity. Post-translationally, sumoylated with SUMO2. Main site is Lys-14 which is enhanced by phosphorylation on Ser-19, cofactor activation, and by interaction with PIAS4. Sumoylation enhances repression of transcriptional activity, but has no effect on subcellular location nor on DNA binding. In terms of processing, reversibly acetylated. Acetylation by PCAF/KAT2 at Lys-129, Lys-138, Lys-160 and Lys-162 and PCAF/KAT2 decreases transcriptional activity probably by inhibiting DNA-binding activity; deacetylation involves SIRT1 and HDAC8 and increases DNA-binding.

The protein localises to the nucleus. It is found in the cytoplasm. Its function is as follows. Binds to an ERR-alpha response element (ERRE) containing a single consensus half-site, 5'-TNAAGGTCA-3'. Can bind to the medium-chain acyl coenzyme A dehydrogenase (MCAD) response element NRRE-1 and may act as an important regulator of MCAD promoter. Binds to the C1 region of the lactoferrin gene promoter. Requires dimerization and the coactivator, PGC-1A, for full activity. The ERRalpha/PGC1alpha complex is a regulator of energy metabolism. Induces the expression of PERM1 in the skeletal muscle. The polypeptide is Steroid hormone receptor ERR1 (ESRRA) (Homo sapiens (Human)).